Consider the following 706-residue polypeptide: Polyribonucleotide nucleotidyltransferase (706 aa).

Mg(2+)-binding residues include aspartate 488 and aspartate 494. In terms of domain architecture, KH spans 555–614 (PRLFTMKINPDKIRDVIGKGGSVIRALTEETGTQINIDEDGTITIASADPAKAEEAKRRI). One can recognise an S1 motif domain in the interval 624–692 (GKIYEGPITK…EKGRIKLSMK (69 aa)).

The protein belongs to the polyribonucleotide nucleotidyltransferase family. The cofactor is Mg(2+).

It is found in the cytoplasm. It catalyses the reaction RNA(n+1) + phosphate = RNA(n) + a ribonucleoside 5'-diphosphate. Functionally, involved in mRNA degradation. Catalyzes the phosphorolysis of single-stranded polyribonucleotides processively in the 3'- to 5'-direction. This chain is Polyribonucleotide nucleotidyltransferase, found in Albidiferax ferrireducens (strain ATCC BAA-621 / DSM 15236 / T118) (Rhodoferax ferrireducens).